Here is a 548-residue protein sequence, read N- to C-terminus: CTP synthase (548 aa).

Positions methionine 1 to leucine 270 are amidoligase domain. Serine 13 provides a ligand contact to CTP. A UTP-binding site is contributed by serine 13. Residues serine 14–isoleucine 19 and aspartate 71 each bind ATP. 2 residues coordinate Mg(2+): aspartate 71 and glutamate 144. Residues aspartate 151 to glutamate 153, lysine 191 to glutamine 196, and lysine 227 each bind CTP. UTP is bound by residues lysine 191–glutamine 196 and lysine 227. The region spanning threonine 295–arginine 545 is the Glutamine amidotransferase type-1 domain. Residue glycine 356 participates in L-glutamine binding. Cysteine 383 functions as the Nucleophile; for glutamine hydrolysis in the catalytic mechanism. Residues leucine 384 to glutamine 387, glutamate 407, and arginine 473 contribute to the L-glutamine site. Catalysis depends on residues histidine 518 and glutamate 520.

Belongs to the CTP synthase family. In terms of assembly, homotetramer.

The enzyme catalyses UTP + L-glutamine + ATP + H2O = CTP + L-glutamate + ADP + phosphate + 2 H(+). It carries out the reaction L-glutamine + H2O = L-glutamate + NH4(+). It catalyses the reaction UTP + NH4(+) + ATP = CTP + ADP + phosphate + 2 H(+). It functions in the pathway pyrimidine metabolism; CTP biosynthesis via de novo pathway; CTP from UDP: step 2/2. Allosterically activated by GTP, when glutamine is the substrate; GTP has no effect on the reaction when ammonia is the substrate. The allosteric effector GTP functions by stabilizing the protein conformation that binds the tetrahedral intermediate(s) formed during glutamine hydrolysis. Inhibited by the product CTP, via allosteric rather than competitive inhibition. Its function is as follows. Catalyzes the ATP-dependent amination of UTP to CTP with either L-glutamine or ammonia as the source of nitrogen. Regulates intracellular CTP levels through interactions with the four ribonucleotide triphosphates. This is CTP synthase from Bordetella petrii (strain ATCC BAA-461 / DSM 12804 / CCUG 43448).